Here is a 197-residue protein sequence, read N- to C-terminus: Dephospho-CoA kinase (197 aa).

The DPCK domain maps to 2–197 (IIGITGGIAS…SALLSLANPR (196 aa)). 10–15 (ASGKST) provides a ligand contact to ATP.

This sequence belongs to the CoaE family.

The protein localises to the cytoplasm. It carries out the reaction 3'-dephospho-CoA + ATP = ADP + CoA + H(+). The protein operates within cofactor biosynthesis; coenzyme A biosynthesis; CoA from (R)-pantothenate: step 5/5. Its function is as follows. Catalyzes the phosphorylation of the 3'-hydroxyl group of dephosphocoenzyme A to form coenzyme A. The protein is Dephospho-CoA kinase of Streptococcus pyogenes serotype M28 (strain MGAS6180).